A 412-amino-acid chain; its full sequence is Inactive serine protease 35 (412 aa).

Positions 1–23 (MGAMFFGLMLFTLGWTLIDGSES) are cleaved as a signal peptide. A glycan (N-linked (GlcNAc...) asparagine) is linked at Asn-110. Positions 124–407 (VYGTDSRFSI…ICLWMHGDDA (284 aa)) constitute a Peptidase S1 domain. Cys-154 and Cys-170 form a disulfide bridge. Residues 192-207 (RNKGGGKRRRGSRRNR) are compositionally biased toward basic residues. Residues 192 to 246 (RNKGGGKRRRGSRRNRREVSGAGREGSQDSLKETAKAGRRRKGSARRQRAADGRP) are disordered. Over residues 217 to 227 (GSQDSLKETAK) the composition is skewed to basic and acidic residues. The segment covering 228–239 (AGRRRKGSARRQ) has biased composition (basic residues).

Belongs to the peptidase S1 family.

It localises to the secreted. This chain is Inactive serine protease 35 (PRSS35), found in Bos taurus (Bovine).